A 131-amino-acid chain; its full sequence is Type IV wide pilus major component PilA4 (131 aa).

The propeptide at 1 to 6 is leader sequence; sequence MRNAKG. Phe7 is subject to N-methylphenylalanine. A helical membrane pass occupies residues 7–27; the sequence is FTLIELLIVIAIIAILAAVLI. Cys95 and Cys130 are oxidised to a cystine.

Interacts with PilQ. In terms of processing, found in three forms of 14-kDa, 18-kDa and a glycosylated 23-kDa form. Both narrow and wide pili are glycosylated.

The protein resides in the cell inner membrane. Its subcellular location is the cell outer membrane. It is found in the periplasm. Plays an essential role in the assembly of two types of T4P pili: a wide and a narrow that participate in natural transformation and twitching motility. Major component of the wide pilus that is essential for natural transformation working as a DNA translocator structure that spans the inner and outer membranes. In addition, participates in the assembly of the narrow pilus composed of the PilA5 subunit that is required for twitching motility. This is Type IV wide pilus major component PilA4 (pilA4) from Thermus thermophilus (strain ATCC BAA-163 / DSM 7039 / HB27).